The primary structure comprises 208 residues: Small ribosomal subunit protein uS4 (208 aa).

An S4 RNA-binding domain is found at 98 to 168; it reads RRLDNVVFRL…DSLDTVVRRG (71 aa).

It belongs to the universal ribosomal protein uS4 family. As to quaternary structure, part of the 30S ribosomal subunit. Contacts protein S5. The interaction surface between S4 and S5 is involved in control of translational fidelity.

Functionally, one of the primary rRNA binding proteins, it binds directly to 16S rRNA where it nucleates assembly of the body of the 30S subunit. With S5 and S12 plays an important role in translational accuracy. This chain is Small ribosomal subunit protein uS4, found in Desulforapulum autotrophicum (strain ATCC 43914 / DSM 3382 / VKM B-1955 / HRM2) (Desulfobacterium autotrophicum).